Consider the following 1217-residue polypeptide: ATP-dependent RNA helicase DHX30 (1217 aa).

2 positions are modified to phosphoserine: Asp-15 and Ser-29. Positions 76–144 (PKNLLNSVIG…QAAAAACQLF (69 aa)) constitute a DRBM domain. Residues 176–223 (WWRPEPTMPPTSWRQLNPENIRPGGPAGLSRSLGREEEEDEEEELEEG) form a disordered region. Positions 211–223 (EEEEDEEEELEEG) are enriched in acidic residues. Residues Ser-249 and Ser-403 each carry the phosphoserine modification. The Helicase ATP-binding domain occupies 467 to 635 (LSAIEQHPVV…FGGCPVIKVP (169 aa)). An ATP-binding site is contributed by 480–487 (GDTGCGKT). A DEAH box motif is present at residues 582-585 (DEVH). The Helicase C-terminal domain maps to 677-850 (LVTDLVLHID…NLVLQAKIHM (174 aa)).

This sequence belongs to the DEAD box helicase family. DEAH subfamily. In terms of assembly, identified in a complex with TFAM and SSBP1. Interacts (via N-terminus) with ZC3HAV1 (via N-terminal domain) in an RNA-independent manner. Found in a complex with GRSF1, DDX28, FASTKD2 and FASTKD5. Phosphorylated on Ser-15. In terms of tissue distribution, expressed in the heart, brain, spleen, lung, liver, skeletal muscle, kidney, and testis. Expression is strongest in the testis and brain, while the lowest levels of expression are found in the spleen and lung.

The protein resides in the cytoplasm. Its subcellular location is the mitochondrion. The protein localises to the mitochondrion matrix. It is found in the mitochondrion nucleoid. The catalysed reaction is ATP + H2O = ADP + phosphate + H(+). RNA-dependent helicase. Plays an important role in the assembly of the mitochondrial large ribosomal subunit. Required for optimal function of the zinc-finger antiviral protein ZC3HAV1. Associates with mitochondrial DNA. Involved in nervous system development and differentiation through its involvement in the up-regulation of a number of genes which are required for neurogenesis, including GSC, NCAM1, neurogenin, and NEUROD. The polypeptide is ATP-dependent RNA helicase DHX30 (Dhx30) (Mus musculus (Mouse)).